Here is a 695-residue protein sequence, read N- to C-terminus: Calcium-binding acidic-repeat protein (695 aa).

The segment at residues 1–20 (MSHLWCWLFLVLCLACLVLS) is a signal peptide (or 23). TSP type-3 repeat units follow at residues 24–38 (KDSD…DEIN), 47–56 (ADSDQDGLTD), 70–82 (KDTD…DGVE), 184–196 (GDSD…DGAE), 202–214 (KDSD…DEEE), and 248–260 (GDSD…DGAE). A disordered region spans residues 45 to 695 (YNADSDQDGL…TDPWRSDHSV (651 aa)). The span at 59-70 (EVNRHQTHPQDK) shows a compositional bias: basic and acidic residues. Composition is skewed to acidic residues over residues 271-283 (ADSD…DGEE), 291-306 (PEDP…DGDE), and 313-324 (DPEEDDSDEDGV). 15 TSP type-3 repeats span residues 294–308 (PDSD…DEVN), 317–329 (DDSD…DGAE), 340–352 (EDSD…DGAE), 363–375 (EDSD…DGAE), 379–393 (TDSD…DEVA), 402–414 (ADSD…DGAE), 425–437 (KDTD…DGVE), 470–482 (EDTD…DGAE), 493–505 (ADTD…DGAE), 516–528 (ADSD…DGAE), 539–551 (GDSD…DAAE), 555–569 (KDSD…DEVR), 600–609 (RDTDGDGVAD), 623–635 (ADTD…DGAE), and 646–658 (ADSD…DGAE). Composition is skewed to acidic residues over residues 361–370 (NDEDSDDDGI) and 381–392 (SDGDGLPDEDEV). Composition is skewed to acidic residues over residues 467 to 477 (PNDEDTDDDGL) and 491 to 500 (EDADTDDDGL). The span at 537–546 (NDGDSDDDGV) shows a compositional bias: acidic residues. Residues 589–603 (EILKHKTDPRNRDTD) are compositionally biased toward basic and acidic residues. Positions 665–679 (NAKDGDSDDDGKADG) are enriched in basic and acidic residues.

The protein resides in the secreted. Its subcellular location is the endoplasmic reticulum. Functionally, may function as a calcium-binding protein. In Euglena gracilis, this protein is Calcium-binding acidic-repeat protein.